The following is a 300-amino-acid chain: MVDIKVVSQRSKKEVGSFSTSSSTTVGELKKQISSKTRLGTERIRLAVPSKTSKLPNAFEALGKDSDLVSKHVGADSTLYFKDLGPQISWSLVFICEYAGPLFVYPIFYFLSNLIYGTDSPKSFAQKVALVCYSLHYIKRIYETIFVHRFSHGTMPIFNLFKNCSYYWGCTAMVSYFVNHPLYTEAPIERVYLGLGLWIIGEVFNYICHIQLRNLRPAGSTERKIPRGLLFEFVSCPNYTVEILSWIGFSILTQTLTSWIFALMGAAQMWIWAVGKHRRYRKEFGDKYPKSRKILIPFLL.

Residues 91–111 traverse the membrane as a helical segment; it reads SLVFICEYAGPLFVYPIFYFL. N163 carries an N-linked (GlcNAc...) asparagine glycan. A helical transmembrane segment spans residues 191–211; that stretch reads VYLGLGLWIIGEVFNYICHIQ. N-linked (GlcNAc...) asparagine glycosylation occurs at N238. Residues 243-263 form a helical membrane-spanning segment; that stretch reads ILSWIGFSILTQTLTSWIFAL.

This sequence belongs to the steroid 5-alpha reductase family.

The protein resides in the endoplasmic reticulum membrane. The catalysed reaction is a very-long-chain 2,3-saturated fatty acyl-CoA + NADP(+) = a very-long-chain (2E)-enoyl-CoA + NADPH + H(+). It participates in lipid metabolism; fatty acid biosynthesis. Its function is as follows. Catalyzes the last of the four reactions of the long-chain fatty acids elongation cycle. This endoplasmic reticulum-bound enzymatic process, allows the addition of 2 carbons to the chain of long- and very long-chain fatty acids/VLCFAs per cycle. This enzyme reduces the trans-2,3-enoyl-CoA fatty acid intermediate to an acyl-CoA that can be further elongated by entering a new cycle of elongation. Thereby, it participates in the production of VLCFAs of different chain lengths that are involved in multiple biological processes as precursors of membrane lipids and lipid mediators. This Dictyostelium discoideum (Social amoeba) protein is Very-long-chain enoyl-CoA reductase (gpsn2).